The sequence spans 315 residues: Melanocyte-stimulating hormone receptor (315 aa).

Residues 1–35 (MSTQEPQKSLLGSLNSNATSHLGLATNQSEPWCLY) lie on the Extracellular side of the membrane. Residues asparagine 17 and asparagine 27 are each glycosylated (N-linked (GlcNAc...) asparagine). Residues 36 to 61 (VSIPDGLFLSLGLVSLVENVLVVIAI) traverse the membrane as a helical segment. The Cytoplasmic segment spans residues 62 to 70 (TKNRNLHSP). A helical transmembrane segment spans residues 71–91 (MYYFICCLALSDLMVSVSIVL). The Extracellular portion of the chain corresponds to 92–116 (ETTIILLLEAGILVARVALVQQLDN). The helical transmembrane segment at 117 to 138 (LIDVLICGSMVSSLCFLGIIAI) threads the bilayer. The Cytoplasmic segment spans residues 139–161 (DRYISIFYALRYHSIVTLPRARR). A helical membrane pass occupies residues 162–181 (AVVGIWMVSIVSSTLFITYY). Topologically, residues 182–189 (KHTAVLLC) are extracellular. A helical transmembrane segment spans residues 190–209 (LVTFFLAMLALMAILYAHMF). The Cytoplasmic segment spans residues 210 to 238 (TRACQHAQGIAQLHKRRRSIRQGFCLKGA). A helical transmembrane segment spans residues 239–264 (ATLTILLGIFFLCWGPFFLHLLLIVL). Over 265 to 277 (CPQHPTCSCIFKN) the chain is Extracellular. Residues 278–298 (FNLFLLLIVLSSTVDPLIYAF) form a helical membrane-spanning segment. The Cytoplasmic segment spans residues 299 to 315 (RSQELRMTLKEVLLCSW). The S-palmitoyl cysteine moiety is linked to residue cysteine 313.

It belongs to the G-protein coupled receptor 1 family. As to quaternary structure, interacts with MGRN1, but does not undergo MGRN1-mediated ubiquitination; this interaction competes with GNAS-binding and thus inhibits agonist-induced cAMP production. Interacts with OPN3; the interaction results in a decrease in MC1R-mediated cAMP signaling and ultimately a decrease in melanin production in melanocytes.

The protein resides in the cell membrane. Functionally, receptor for MSH (alpha, beta and gamma) and ACTH. The activity of this receptor is mediated by G proteins which activate adenylate cyclase. Mediates melanogenesis, the production of eumelanin (black/brown) and phaeomelanin (red/yellow), via regulation of cAMP signaling in melanocytes. In Mus musculus (Mouse), this protein is Melanocyte-stimulating hormone receptor (Mc1r).